The following is a 319-amino-acid chain: HTH-type transcriptional regulator YidZ (319 aa).

The HTH lysR-type domain maps to 8 to 65 (LDLNLLLCLQLLMQERSVTKAAKRMNVTPSAVSKSLAKLRAWFDDPLFVNTPLGLAPT). The H-T-H motif DNA-binding region spans 25-44 (VTKAAKRMNVTPSAVSKSLA).

Belongs to the LysR transcriptional regulatory family.

In terms of biological role, involved in anaerobic NO protection. The chain is HTH-type transcriptional regulator YidZ from Salmonella agona (strain SL483).